A 299-amino-acid chain; its full sequence is MSAPPENLMTESRNPASSHIDTLSTLEMLKVMNAEDKKVALAVELALPSITQAVDLISAAFHKKGRLIYCGAGTSGRLGILDASECPPTFGTPAKQVMALIAGGHRAILKAVENAEDNLQAGQSDLQNINFNENDILVGIAASGSTPYVIGAMRYAKSINAQVIAINCNPNSLMSKECDVNICAVVGPEVLTGSSRLKAGTAQKLILNMLTTGAMIRTGKVFGNLMVDVQATNAKLVERQKMIVIAATDCLREEAEKALLQCNGHCKTAIVMILTNTNTAQAKSLLAKNNGYIRQSIVK.

One can recognise an SIS domain in the interval 57-220 (ISAAFHKKGR…TTGAMIRTGK (164 aa)). The active-site Proton donor is E85. E116 is an active-site residue.

The protein belongs to the GCKR-like family. MurNAc-6-P etherase subfamily. In terms of assembly, homodimer.

It carries out the reaction N-acetyl-D-muramate 6-phosphate + H2O = N-acetyl-D-glucosamine 6-phosphate + (R)-lactate. Its pathway is amino-sugar metabolism; 1,6-anhydro-N-acetylmuramate degradation. It participates in amino-sugar metabolism; N-acetylmuramate degradation. The protein operates within cell wall biogenesis; peptidoglycan recycling. Functionally, specifically catalyzes the cleavage of the D-lactyl ether substituent of MurNAc 6-phosphate, producing GlcNAc 6-phosphate and D-lactate. Together with AnmK, is also required for the utilization of anhydro-N-acetylmuramic acid (anhMurNAc) either imported from the medium or derived from its own cell wall murein, and thus plays a role in cell wall recycling. The sequence is that of N-acetylmuramic acid 6-phosphate etherase from Psychromonas ingrahamii (strain DSM 17664 / CCUG 51855 / 37).